Consider the following 948-residue polypeptide: MSSSKLMDFGLTWIIMMMILLQGCRSCIESERQGLLEIKAYIISVITDPHLDIRRGWMSSDRSCCHWRRIKCDITSKRVIGISLSLESIRPPDPLPQLNLTFFYPFEELQSLNLSSGYFKGWFDERKGGKGLGSLRNLETLDLGVNFYDTSVLPYLNEAVSLKTLILHDNLFKGGFPVQELINLTSLEVLDLKFNKFSGQLPTQELTNLRNLRALDLSNNKFSGSLQKQGICRLEQLQELRLSRNRFEGEIPLCFSRFSKLRVLDLSSNHLSGKIPYFISDFKSMEYLSLLDNDFEGLFSLGLITELTELKVFKLSSRSGMLQIVETNVSGGLQSQLSSIMLSHCNLGKIPGFLWYQQELRVIDLSNNILSGVFPTWLLENNTELQALLLQNNSFKTLTLPRTMRRLQILDLSVNNFNNQLPKDVGLILASLRHLNLSNNEFLGNMPSSMARMENIEFMDLSYNNFSGKLPRNLFTGCYSLSWLKLSHNRFSGPIIRKSSDETSLITLIMDNNMFTGKIPRTLLNLRMLSVIDLSNNLLTGTIPRWLGNFFLEVLRISNNRLQGAIPPSLFNIPYLWLLDLSGNFLSGSLPLRSSSDYGYILDLHNNNLTGSIPDTLWYGLRLLDLRNNKLSGNIPLFRSTPSISVVLLRENNLTGKIPVELCGLSNVRMLDFAHNRLNESIPSCVTNLSFGSGGHSNADSDWYPASLLSNFMEIYTEVYYESLIVSDRFSLDYSVDFNVQVEFAVKQRYDLYMRGTLNQMFGLDLSSNELSGNIPEELGDLKRVRSLNLSRNSLSGSIPGSFSNLRSIESLDLSFNKLHGTIPSQLTLLQSLVVFNVSYNNLSGVIPQGKQFNTFGEKSYLGNFLLCGSPTKRSCGGTTISSGKEYEDDDESGLLDIVVLWWSLGTTYVTVMMGFLVFLCFDSPWRRAWFCLVDTFIDRVKDVLGVI.

An N-terminal signal peptide occupies residues 1–26; it reads MSSSKLMDFGLTWIIMMMILLQGCRS. Topologically, residues 27–897 are extracellular; it reads CIESERQGLL…EDDDESGLLD (871 aa). N99 and N113 each carry an N-linked (GlcNAc...) asparagine glycan. LRR repeat units lie at residues 106–129 and 135–162; these read FEEL…RKGG and LRNL…AVSL. The LRR 3; degenerate repeat unit spans residues 163 to 183; sequence KTLILHDNLFKGGFPVQELIN. Residue N183 is glycosylated (N-linked (GlcNAc...) asparagine). 25 LRR repeats span residues 184–208, 210–233, 234–257, 258–284, 286–306, 307–332, 334–357, 358–381, 382–404, 405–429, 430–453, 454–477, 479–502, 503–526, 527–549, 550–573, 575–595, 596–618, 619–640, 642–665, 666–689, 758–782, 783–805, 807–831, and 833–855; these read LTSL…ELTN, RNLR…GICR, LEQL…CFSR, FSKL…DFKS, EYLS…LITE, LTEL…VSGG, QSQL…LWYQ, QELR…LLEN, NTEL…PRTM, RRLQ…GLIL, ASLR…MARM, ENIE…LFTG, YSLS…SSDE, TSLI…LLNL, RMLS…WLGN, FFLE…LFNI, YLWL…LRSS, SDYG…DTLW, YGLR…LFRS, PSIS…LCGL, SNVR…VTNL, LNQM…LGDL, KRVR…SFSN, RSIE…TLLQ, and LVVF…QFNT. An N-linked (GlcNAc...) asparagine glycan is attached at N328. N-linked (GlcNAc...) asparagine glycosylation is found at N381 and N392. N-linked (GlcNAc...) asparagine glycans are attached at residues N436 and N465. N-linked (GlcNAc...) asparagine glycosylation is present at N608. Residues N653, N679, and N688 are each glycosylated (N-linked (GlcNAc...) asparagine). N-linked (GlcNAc...) asparagine glycosylation is present at N789. N-linked (GlcNAc...) asparagine glycosylation is found at N837 and N842. The chain crosses the membrane as a helical span at residues 898 to 918; sequence IVVLWWSLGTTYVTVMMGFLV. The Cytoplasmic segment spans residues 919–948; sequence FLCFDSPWRRAWFCLVDTFIDRVKDVLGVI.

Belongs to the RLP family.

It is found in the cell membrane. This chain is Receptor-like protein 45, found in Arabidopsis thaliana (Mouse-ear cress).